The following is a 178-amino-acid chain: ATP synthase subunit d, mitochondrial (178 aa).

Positions 149-178 (NKPTFWPHTPEEQVGYKSKEQLEAEAQGHH) are disordered. Residues 165 to 178 (KSKEQLEAEAQGHH) are compositionally biased toward basic and acidic residues.

It belongs to the ATPase d subunit family. In terms of assembly, F-type ATPases have 2 components, CF(1) - the catalytic core - and CF(0) - the membrane proton channel. CF(0) seems to have nine subunits: a, b, c, d, e, f, g, F6 and 8 (or A6L).

The protein localises to the mitochondrion. The protein resides in the mitochondrion inner membrane. In terms of biological role, mitochondrial membrane ATP synthase (F(1)F(0) ATP synthase or Complex V) produces ATP from ADP in the presence of a proton gradient across the membrane which is generated by electron transport complexes of the respiratory chain. F-type ATPases consist of two structural domains, F(1) - containing the extramembraneous catalytic core, and F(0) - containing the membrane proton channel, linked together by a central stalk and a peripheral stalk. During catalysis, ATP synthesis in the catalytic domain of F(1) is coupled via a rotary mechanism of the central stalk subunits to proton translocation. Part of the complex F(0) domain and the peripheric stalk, which acts as a stator to hold the catalytic alpha(3)beta(3) subcomplex and subunit a/ATP6 static relative to the rotary elements. This Drosophila melanogaster (Fruit fly) protein is ATP synthase subunit d, mitochondrial.